Consider the following 1462-residue polypeptide: DNA topoisomerase 2 (1462 aa).

ATP contacts are provided by residues Asn-79, Asn-108, 136–138 (SSN), and 149–156 (GRNGYGAK). Residues 332–334 (NKK) are interaction with DNA. Residue 365–367 (QTK) participates in ATP binding. Residues 442–556 (CTLILTEGDS…SLLKVPSFLV (115 aa)) form the Toprim domain. Mg(2+)-binding residues include Glu-448, Asp-525, and Asp-527. Residues 671-1131 (KDFVNKELIL…PTTSLWLKDL (461 aa)) enclose the Topo IIA-type catalytic domain. The active-site O-(5'-phospho-DNA)-tyrosine intermediate is Tyr-761. Residues 947-956 (KLTSTISTSN) form an interaction with DNA region. Disordered regions lie at residues 1040-1077 (PMPR…SVSV) and 1147-1462 (EDDR…EDDD). A compositionally biased stretch (acidic residues) spans 1056-1068 (NDDDSEEQEDAEP). Residues 1167 to 1181 (PAKKPPQPRKNTKKA) show a composition bias toward basic residues. The segment covering 1198-1207 (AVEAAKPAEV) has biased composition (low complexity). Residues 1240 to 1250 (IESSGEKSQAM) are compositionally biased toward polar residues. Over residues 1260–1275 (AGKKQNNKRGGAKKKS) the composition is skewed to basic residues. Positions 1282-1300 (SDSDNEVNDVDDDDDDFEE) are enriched in acidic residues. 2 stretches are compositionally biased toward low complexity: residues 1314–1334 (KPAA…APAA) and 1419–1430 (APQPARARPQRA). Over residues 1442-1462 (SESEEDSDEDAELSDFEEDDD) the composition is skewed to acidic residues.

The protein belongs to the type II topoisomerase family. As to quaternary structure, homodimer. Requires Mg(2+) as cofactor. It depends on Mn(2+) as a cofactor. Ca(2+) serves as cofactor. Abundant in proliferative tissues.

It catalyses the reaction ATP-dependent breakage, passage and rejoining of double-stranded DNA.. Functionally, control of topological states of DNA by transient breakage and subsequent rejoining of DNA strands. Topoisomerase II makes double-strand breaks. This Pisum sativum (Garden pea) protein is DNA topoisomerase 2 (TOP2).